Consider the following 191-residue polypeptide: Small ribosomal subunit protein uS5 (191 aa).

Residues 21 to 84 (FADRLVAINR…EQAKRQMIRV (64 aa)) form the S5 DRBM domain. The segment at 155–191 (LRKESSPRSVAQRRGKKVADILPKVDAAPAPAETAEA) is disordered. Positions 181–191 (AAPAPAETAEA) are enriched in low complexity.

Belongs to the universal ribosomal protein uS5 family. Part of the 30S ribosomal subunit. Contacts proteins S4 and S8.

With S4 and S12 plays an important role in translational accuracy. In terms of biological role, located at the back of the 30S subunit body where it stabilizes the conformation of the head with respect to the body. The polypeptide is Small ribosomal subunit protein uS5 (Roseobacter denitrificans (strain ATCC 33942 / OCh 114) (Erythrobacter sp. (strain OCh 114))).